A 374-amino-acid chain; its full sequence is DNA replication and repair protein RecF (374 aa).

30-37 lines the ATP pocket; sequence GPNAQGKT.

The protein belongs to the RecF family.

It localises to the cytoplasm. Its function is as follows. The RecF protein is involved in DNA metabolism; it is required for DNA replication and normal SOS inducibility. RecF binds preferentially to single-stranded, linear DNA. It also seems to bind ATP. The polypeptide is DNA replication and repair protein RecF (Lactobacillus gasseri (strain ATCC 33323 / DSM 20243 / BCRC 14619 / CIP 102991 / JCM 1131 / KCTC 3163 / NCIMB 11718 / NCTC 13722 / AM63)).